The sequence spans 31 residues: MFTVISYFGFLLVALAFTLVTYLGLRAIQLI.

A helical membrane pass occupies residues 4–24 (VISYFGFLLVALAFTLVTYLG).

The protein belongs to the PetL family. The 4 large subunits of the cytochrome b6-f complex are cytochrome b6, subunit IV (17 kDa polypeptide, PetD), cytochrome f and the Rieske protein, while the 4 small subunits are PetG, PetL, PetM and PetN. The complex functions as a dimer.

The protein localises to the plastid. It is found in the chloroplast thylakoid membrane. Functionally, component of the cytochrome b6-f complex, which mediates electron transfer between photosystem II (PSII) and photosystem I (PSI), cyclic electron flow around PSI, and state transitions. PetL is important for photoautotrophic growth as well as for electron transfer efficiency and stability of the cytochrome b6-f complex. The sequence is that of Cytochrome b6-f complex subunit 6 from Nephroselmis olivacea (Green alga).